The primary structure comprises 255 residues: Imidazole glycerol phosphate synthase subunit HisF (255 aa).

Active-site residues include Asp-12 and Asp-131.

This sequence belongs to the HisA/HisF family. Heterodimer of HisH and HisF.

Its subcellular location is the cytoplasm. It carries out the reaction 5-[(5-phospho-1-deoxy-D-ribulos-1-ylimino)methylamino]-1-(5-phospho-beta-D-ribosyl)imidazole-4-carboxamide + L-glutamine = D-erythro-1-(imidazol-4-yl)glycerol 3-phosphate + 5-amino-1-(5-phospho-beta-D-ribosyl)imidazole-4-carboxamide + L-glutamate + H(+). Its pathway is amino-acid biosynthesis; L-histidine biosynthesis; L-histidine from 5-phospho-alpha-D-ribose 1-diphosphate: step 5/9. Its function is as follows. IGPS catalyzes the conversion of PRFAR and glutamine to IGP, AICAR and glutamate. The HisF subunit catalyzes the cyclization activity that produces IGP and AICAR from PRFAR using the ammonia provided by the HisH subunit. This Neisseria meningitidis serogroup C (strain 053442) protein is Imidazole glycerol phosphate synthase subunit HisF.